The chain runs to 489 residues: Ribonuclease G (489 aa).

In terms of domain architecture, S1 motif spans 39–128; sequence GNIYKGRVSR…LTTDITLPSR (90 aa). Mg(2+)-binding residues include Asp-304 and Asp-347.

The protein belongs to the RNase E/G family. RNase G subfamily. Homodimer, in equilibrium with possible higher multimers. Mg(2+) serves as cofactor.

It localises to the cytoplasm. An endonuclease that acts in the processing of the 5'-end of 16S rRNA and 23S rRNA. It prefers 5'-monophosphorylated substrates and cleaves single-stranded sites rich in A and U residues; contributes to tRNA processing and mRNA turnover. The polypeptide is Ribonuclease G (rng) (Escherichia coli O157:H7).